Reading from the N-terminus, the 74-residue chain is UPF0435 protein BCB4264_A0471 (74 aa).

It belongs to the UPF0435 family.

This chain is UPF0435 protein BCB4264_A0471, found in Bacillus cereus (strain B4264).